The sequence spans 1187 residues: Nucleolar protein 6 (1187 aa).

The segment covering 1–20 (MGRIKENQSKKKTLLRDSKA) has biased composition (basic and acidic residues). Disordered regions lie at residues 1-64 (MGRI…FKHP) and 1134-1187 (REQR…SALC).

It belongs to the NRAP family. In terms of assembly, part of the small subunit (SSU) processome, composed of more than 70 proteins and the RNA chaperone small nucleolar RNA (snoRNA) U3.

The protein localises to the nucleus. Its subcellular location is the nucleolus. The protein resides in the chromosome. Part of the small subunit (SSU) processome, first precursor of the small eukaryotic ribosomal subunit. During the assembly of the SSU processome in the nucleolus, many ribosome biogenesis factors, an RNA chaperone and ribosomal proteins associate with the nascent pre-rRNA and work in concert to generate RNA folding, modifications, rearrangements and cleavage as well as targeted degradation of pre-ribosomal RNA by the RNA exosome. This chain is Nucleolar protein 6, found in Drosophila mojavensis (Fruit fly).